Consider the following 267-residue polypeptide: Pyridoxine 5'-phosphate synthase (267 aa).

Position 8 (N8) interacts with 3-amino-2-oxopropyl phosphate. 10 to 11 (DH) lines the 1-deoxy-D-xylulose 5-phosphate pocket. Residue R19 coordinates 3-amino-2-oxopropyl phosphate. H44 (proton acceptor) is an active-site residue. Positions 46 and 51 each coordinate 1-deoxy-D-xylulose 5-phosphate. E71 functions as the Proton acceptor in the catalytic mechanism. Residue T101 participates in 1-deoxy-D-xylulose 5-phosphate binding. The active-site Proton donor is H219. 3-amino-2-oxopropyl phosphate-binding positions include G220 and 241-242 (GH).

This sequence belongs to the PNP synthase family. In terms of assembly, homooctamer; tetramer of dimers.

The protein resides in the cytoplasm. It catalyses the reaction 3-amino-2-oxopropyl phosphate + 1-deoxy-D-xylulose 5-phosphate = pyridoxine 5'-phosphate + phosphate + 2 H2O + H(+). It participates in cofactor biosynthesis; pyridoxine 5'-phosphate biosynthesis; pyridoxine 5'-phosphate from D-erythrose 4-phosphate: step 5/5. Catalyzes the complicated ring closure reaction between the two acyclic compounds 1-deoxy-D-xylulose-5-phosphate (DXP) and 3-amino-2-oxopropyl phosphate (1-amino-acetone-3-phosphate or AAP) to form pyridoxine 5'-phosphate (PNP) and inorganic phosphate. The polypeptide is Pyridoxine 5'-phosphate synthase (Helicobacter hepaticus (strain ATCC 51449 / 3B1)).